The sequence spans 738 residues: uncharacterized protein (738 aa).

The N-terminal stretch at 1-27 is a signal peptide; that stretch reads MKKLLTSLMLSTASFMLLLTVSNKAYA. 2 consecutive transmembrane segments (helical) span residues 612–632 and 712–732; these read TFHT…ILNS and ITYA…TVTI.

Its subcellular location is the membrane. This is an uncharacterized protein from Mycoplasma (Bacteriophage L2).